Reading from the N-terminus, the 561-residue chain is Putative cuticle collagen 145 (561 aa).

A signal peptide spans 1 to 30 (MEKILVTLSTGAASIAVLAVLFTIPSLYNT). Pro residues predominate over residues 100–112 (TCPPGPPGPPGQP). Disordered stretches follow at residues 100–134 (TCPP…TYAP), 148–271 (PQGP…PGGP), 367–398 (TCPP…NTAT), and 422–540 (TGPA…GPGL). 2 triple-helical region regions span residues 102–127 (PPGP…KGED) and 153–276 (GPEG…LPGN). 2 stretches are compositionally biased toward low complexity: residues 164-209 (AGPD…PGQD) and 219-265 (APGA…DGQP). Residues 367 to 379 (TCPPGPPGPPGQP) show a composition bias toward pro residues. A triple-helical region region spans residues 413–544 (KCPQGPAGPT…PGGPGLPGND (132 aa)). 2 stretches are compositionally biased toward low complexity: residues 422 to 467 (TGPA…PGQD) and 486 to 532 (APGA…DGQP). A Collagen-like domain is found at 485-543 (GAPGAPGNAGPAGPAGQDGFPGQDGQPGPAGPAGQDGFPGNAGSDGQPGAPGGPGLPGN).

This sequence belongs to the cuticular collagen family. In terms of assembly, collagen polypeptide chains are complexed within the cuticle by disulfide bonds and other types of covalent cross-links.

Nematode cuticles are composed largely of collagen-like proteins. The cuticle functions both as an exoskeleton and as a barrier to protect the worm from its environment. In Caenorhabditis briggsae, this protein is Putative cuticle collagen 145.